A 267-amino-acid chain; its full sequence is 4-hydroxy-tetrahydrodipicolinate reductase (267 aa).

Residues 8 to 13 (GAAGRM) and Asp-34 each bind NAD(+). Arg-35 is a binding site for NADP(+). NAD(+) is bound by residues 98–100 (GTT) and 122–125 (AANF). His-155 (proton donor/acceptor) is an active-site residue. (S)-2,3,4,5-tetrahydrodipicolinate is bound at residue His-156. Lys-159 (proton donor) is an active-site residue. 165 to 166 (GT) is a (S)-2,3,4,5-tetrahydrodipicolinate binding site.

This sequence belongs to the DapB family.

It localises to the cytoplasm. It carries out the reaction (S)-2,3,4,5-tetrahydrodipicolinate + NAD(+) + H2O = (2S,4S)-4-hydroxy-2,3,4,5-tetrahydrodipicolinate + NADH + H(+). The enzyme catalyses (S)-2,3,4,5-tetrahydrodipicolinate + NADP(+) + H2O = (2S,4S)-4-hydroxy-2,3,4,5-tetrahydrodipicolinate + NADPH + H(+). The protein operates within amino-acid biosynthesis; L-lysine biosynthesis via DAP pathway; (S)-tetrahydrodipicolinate from L-aspartate: step 4/4. Catalyzes the conversion of 4-hydroxy-tetrahydrodipicolinate (HTPA) to tetrahydrodipicolinate. In Pseudomonas savastanoi pv. phaseolicola (strain 1448A / Race 6) (Pseudomonas syringae pv. phaseolicola (strain 1448A / Race 6)), this protein is 4-hydroxy-tetrahydrodipicolinate reductase.